The primary structure comprises 212 residues: Peptide methionine sulfoxide reductase MsrA (212 aa).

C51 is an active-site residue.

It belongs to the MsrA Met sulfoxide reductase family.

It catalyses the reaction L-methionyl-[protein] + [thioredoxin]-disulfide + H2O = L-methionyl-(S)-S-oxide-[protein] + [thioredoxin]-dithiol. The catalysed reaction is [thioredoxin]-disulfide + L-methionine + H2O = L-methionine (S)-S-oxide + [thioredoxin]-dithiol. Has an important function as a repair enzyme for proteins that have been inactivated by oxidation. Catalyzes the reversible oxidation-reduction of methionine sulfoxide in proteins to methionine. This is Peptide methionine sulfoxide reductase MsrA from Vibrio parahaemolyticus serotype O3:K6 (strain RIMD 2210633).